We begin with the raw amino-acid sequence, 359 residues long: tRNA-specific 2-thiouridylase MnmA (359 aa).

ATP contacts are provided by residues 6–13 and leucine 32; that span reads AMSGGVDS. The active-site Nucleophile is the cysteine 97. Cysteines 97 and 195 form a disulfide. Glycine 121 lines the ATP pocket. The segment at 144–146 is interaction with tRNA; it reads KDQ. The Cysteine persulfide intermediate role is filled by cysteine 195.

The protein belongs to the MnmA/TRMU family.

It localises to the cytoplasm. The catalysed reaction is S-sulfanyl-L-cysteinyl-[protein] + uridine(34) in tRNA + AH2 + ATP = 2-thiouridine(34) in tRNA + L-cysteinyl-[protein] + A + AMP + diphosphate + H(+). Functionally, catalyzes the 2-thiolation of uridine at the wobble position (U34) of tRNA, leading to the formation of s(2)U34. This is tRNA-specific 2-thiouridylase MnmA from Tropheryma whipplei (strain TW08/27) (Whipple's bacillus).